We begin with the raw amino-acid sequence, 621 residues long: Lethal(3)malignant brain tumor-like protein 4 (621 aa).

Residues 1–48 form a disordered region; the sequence is MRQPNRKRKLSLESTERMNQDRCTGQTEEEKKPGEVTTPSKRESSVTT. Basic and acidic residues-rich tracts occupy residues 10–20 and 28–44; these read LSLESTERMNQ and EEEKKPGEVTTPSKRES. MBT repeat units lie at residues 52–152, 160–260, and 269–364; these read WSWE…LHIP, FVWM…LVAP, and FSWT…LEVP. The segment at 370–414 adopts a CCHHC-type zinc-finger fold; sequence VKILPGQPACPTPGCRGIGHIRGPRYAGHHSAFGCPYSDVNLKRE. Positions 379, 384, 398, and 404 each coordinate Zn(2+). The region spanning 543 to 607 is the SAM domain; it reads WTVDEVAEFV…YNSILMFRNS (65 aa).

It is found in the nucleus. Putative Polycomb group (PcG) protein. PcG proteins maintain the transcriptionally repressive state of genes, probably via a modification of chromatin, rendering it heritably changed in its expressibility. This is Lethal(3)malignant brain tumor-like protein 4 (L3mbtl4) from Mus musculus (Mouse).